A 145-amino-acid polypeptide reads, in one-letter code: Large ribosomal subunit protein bL35c (145 aa).

The transit peptide at 1 to 56 (MASLSMASVNVSFCHPLRSSSPKVSLRSSVHFATSLSSSHSISGLRAVLPLKISTV) directs the protein to the chloroplast.

This sequence belongs to the bacterial ribosomal protein bL35 family. Part of the 50S ribosomal subunit.

The protein resides in the plastid. It is found in the chloroplast. The sequence is that of Large ribosomal subunit protein bL35c from Arabidopsis thaliana (Mouse-ear cress).